Consider the following 256-residue polypeptide: MTQRFKVTLAYDGTNFAGFQAQPNQRTVQFVLEKAINKMSKKDEYITVYGSGRTDSGVHALGQVVHFDFPHPISAKGMLRGLNSMLPLDCEVVDCKIVPNDFHSRYTTHGKRYLYRVSRGEFVNPFKRLYTGHYKYPLDIEKIKEAMPDVEGTHDYSSFVASGSQAKSHVRTIYEAKVYEDKVNDEIVFEFYGNGFLYNQVRIMVATLLEIGNGKRPVHDFLRLYEVKDRSQARQTAPASGLYLKEVYYDEEDEKL.

The active-site Nucleophile is Asp-55. Tyr-113 is a binding site for substrate.

It belongs to the tRNA pseudouridine synthase TruA family. In terms of assembly, homodimer.

The enzyme catalyses uridine(38/39/40) in tRNA = pseudouridine(38/39/40) in tRNA. Its function is as follows. Formation of pseudouridine at positions 38, 39 and 40 in the anticodon stem and loop of transfer RNAs. This Ligilactobacillus salivarius (strain UCC118) (Lactobacillus salivarius) protein is tRNA pseudouridine synthase A.